A 957-amino-acid chain; its full sequence is Vacuolar membrane protease (957 aa).

The Cytoplasmic portion of the chain corresponds to 1–10 (MARYNPFSFT). A helical membrane pass occupies residues 11-31 (PGPVVFFTTVIYVGLFAALLV). Residues 32–369 (THLTVPDYPS…RVFVVFQLHT (338 aa)) are Vacuolar-facing. N-linked (GlcNAc...) asparagine glycans are attached at residues N48, N105, and N136. Positions 152 and 164 each coordinate Zn(2+). E198 serves as the catalytic Proton acceptor. E199, E224, and H297 together coordinate Zn(2+). The helical transmembrane segment at 370–390 (LFALCVTLLVVAPITLIGLTF) threads the bilayer. The Cytoplasmic portion of the chain corresponds to 391–423 (GLSKADKNYLLARKAFVYSSDDDNPVQLYGWRG). Residues 424–444 (FFRFPIIFISATAVVVALAYL) traverse the membrane as a helical segment. Residues 445–450 (LVRFNA) lie on the Vacuolar side of the membrane. The helical transmembrane segment at 451-471 (FIIYSSPFAVWSMMLSAWFFV) threads the bilayer. Topologically, residues 472 to 490 (AWFFSRGADAMRPSALQRM) are cytoplasmic. The chain crosses the membrane as a helical span at residues 491–511 (YALIWLFIGSFVLLTIVTVFV). At 512-521 (NNYQVVAGYP) the chain is on the vacuolar side. Residues 522-542 (ALFYFAVVFVAIMLSYLELFF) form a helical membrane-spanning segment. Topologically, residues 543-642 (APTKSAYARH…YPGEQEWSGK (100 aa)) are cytoplasmic. 2 disordered regions span residues 559 to 586 (SRRN…PVAD) and 603 to 627 (FTRY…SQRL). Residues 603 to 613 (FTRYGSRRDSA) are compositionally biased toward basic and acidic residues. A helical transmembrane segment spans residues 643 to 663 (LPSWIWIIQLLLLAPLVIVLV). At 664–685 (GQVALLLTSALYQTPSDGNSPL) the chain is on the vacuolar side. The chain crosses the membrane as a helical span at residues 686 to 706 (FIYLAIAALSVLLLAPTGPFI). At 707-713 (HRFTYHV) the chain is on the cytoplasmic side. Residues 714-734 (PTFLFLVCLGTVIYNLVAFPF) traverse the membrane as a helical segment. The Vacuolar segment spans residues 735–957 (SRDHRLKVYF…LVEGFKRFEI (223 aa)). N-linked (GlcNAc...) asparagine glycans are attached at residues N782, N818, and N834.

Belongs to the peptidase M28 family. Zn(2+) is required as a cofactor.

The protein localises to the vacuole membrane. May be involved in vacuolar sorting and osmoregulation. This is Vacuolar membrane protease from Pyrenophora teres f. teres (strain 0-1) (Barley net blotch fungus).